Consider the following 95-residue polypeptide: Protein TusB (95 aa).

The protein belongs to the DsrH/TusB family. Heterohexamer, formed by a dimer of trimers. The hexameric TusBCD complex contains 2 copies each of TusB, TusC and TusD. The TusBCD complex interacts with TusE.

It is found in the cytoplasm. Functionally, part of a sulfur-relay system required for 2-thiolation of 5-methylaminomethyl-2-thiouridine (mnm(5)s(2)U) at tRNA wobble positions. This chain is Protein TusB, found in Cronobacter sakazakii (strain ATCC BAA-894) (Enterobacter sakazakii).